Consider the following 320-residue polypeptide: Putative FBD-associated F-box protein At3g60710 (320 aa).

In terms of domain architecture, F-box spans 2–48; the sequence is EDLISQLPNELLQEILLNLPTSESVRTSVLPTRWRNLWQSVPGLYLI. Residues 212-268 form the FBD domain; it reads MEEIASSPVPKCLQTSIENVKIKMTPKADQEKSRKAETEVANYILENATLLKLTLWL.

The protein is Putative FBD-associated F-box protein At3g60710 of Arabidopsis thaliana (Mouse-ear cress).